A 189-amino-acid polypeptide reads, in one-letter code: Protein Rex (189 aa).

A compositionally biased stretch (basic residues) spans 1–16 (MPKTRRRPRRSQRKRP). Positions 1–27 (MPKTRRRPRRSQRKRPPTPWPTSQGLD) are disordered. The Nuclear localization signal, and RNA-binding (RxRE) signature appears at 2 to 18 (PKTRRRPRRSQRKRPPT). The homomultimerization stretch occupies residues 56–70 (RPAYIVTPYWPPVQS). Ser70 is subject to Phosphoserine; by host. A disordered region spans residues 73 to 189 (SPGTPSMDAL…PPSPGPSCPT (117 aa)). Low complexity predominate over residues 80–94 (DALSAQLYSSLSLDS). Positions 82–93 (LSAQLYSSLSLD) match the Nuclear export signal motif. The homomultimerization stretch occupies residues 123-131 (PSSRPCANT). The span at 143 to 164 (LGSTSQPCLFQTPDSGPKTCTP) shows a compositional bias: polar residues. Thr174 is subject to Phosphothreonine; by host. Phosphoserine; by host is present on Ser177. Pro residues predominate over residues 178–189 (FPPPSPGPSCPT).

Belongs to the deltaretrovirus Rex protein family. In terms of assembly, homomultimer. Multimeric assembly is essential for activity and involves XPO1. Binds to human XPO1 and KPNB1. Interacts (via N-terminal nuclear localization signal) with human NPM1.

The protein resides in the host nucleus. It is found in the host nucleolus. Its subcellular location is the host cytoplasm. In terms of biological role, rex escorts unspliced gag-pro-pol and singly spliced env mRNAs out of the nucleus of infected cells. These mRNAs carry a recognition sequence called Rex responsive element (RxRE or XRE) located at the 3' region of the long terminal repeat (LTR). This function is essential since most HTLV proteins are translated from unspliced or partially spliced pre-mRNAs that cannot exit the nucleus by the pathway used by fully processed cellular mRNAs. Rex itself is translated from a fully spliced mRNA that probably readily exits the nucleus. Rex's nuclear localization signal (NLS) binds directly to KPNB1/importin beta-1 without previous binding to KPNA1/importin alpha-1. KPNB1 binds to the GDP bound form of RAN (Ran-GDP) and targets Rex to the nucleus. In the nucleus, the conversion from Ran-GDP to Ran-GTP dissociates Rex from KPNB1 and allows Rex's binding to the RRE in viral pre-mRNAs. Rex multimerizes on the RRE via cooperative assembly. This multimerization is critical for its full biological activity, since it may shield the viral RNA from being spliced or down-regulated, and probably exposes Rex's nuclear export signal (NES) to the surface. Rex can then form a complex with XPO1/CRM1, RANBP3 and Ran-GTP, leading to nuclear export of the complex. Conversion from Ran-GTP to Ran-GDP mediates dissociation of the Rex/RRE/XPO1/RANBP3/RAN complex, so that Rex can return to the nucleus for a subsequent round of export. The protein is Protein Rex of Human T-cell leukemia virus 1 (strain Japan ATK-1 subtype A) (HTLV-1).